The sequence spans 221 residues: Leucyl/phenylalanyl-tRNA--protein transferase (221 aa).

It belongs to the L/F-transferase family.

It is found in the cytoplasm. The enzyme catalyses N-terminal L-lysyl-[protein] + L-leucyl-tRNA(Leu) = N-terminal L-leucyl-L-lysyl-[protein] + tRNA(Leu) + H(+). It catalyses the reaction N-terminal L-arginyl-[protein] + L-leucyl-tRNA(Leu) = N-terminal L-leucyl-L-arginyl-[protein] + tRNA(Leu) + H(+). It carries out the reaction L-phenylalanyl-tRNA(Phe) + an N-terminal L-alpha-aminoacyl-[protein] = an N-terminal L-phenylalanyl-L-alpha-aminoacyl-[protein] + tRNA(Phe). Its function is as follows. Functions in the N-end rule pathway of protein degradation where it conjugates Leu, Phe and, less efficiently, Met from aminoacyl-tRNAs to the N-termini of proteins containing an N-terminal arginine or lysine. This chain is Leucyl/phenylalanyl-tRNA--protein transferase, found in Phenylobacterium zucineum (strain HLK1).